A 462-amino-acid polypeptide reads, in one-letter code: Cysteine--tRNA ligase (462 aa).

A Zn(2+)-binding site is contributed by Cys-29. Residues 31 to 41 carry the 'HIGH' region motif; that stretch reads PTVYDHAHIGN. Zn(2+) is bound by residues Cys-214, His-239, and Glu-243. A 'KMSKS' region motif is present at residues 272 to 276; sequence KMSKS. ATP is bound at residue Lys-275.

The protein belongs to the class-I aminoacyl-tRNA synthetase family. As to quaternary structure, monomer. Requires Zn(2+) as cofactor.

Its subcellular location is the cytoplasm. It catalyses the reaction tRNA(Cys) + L-cysteine + ATP = L-cysteinyl-tRNA(Cys) + AMP + diphosphate. The protein is Cysteine--tRNA ligase of Azorhizobium caulinodans (strain ATCC 43989 / DSM 5975 / JCM 20966 / LMG 6465 / NBRC 14845 / NCIMB 13405 / ORS 571).